The following is a 291-amino-acid chain: Protease HtpX homolog (291 aa).

Helical transmembrane passes span 4–24 and 38–58; these read VILFLLTNFAVMLVLSVTARI and MGMLLVFAALIGFGGSFISLL. Histidine 144 is a binding site for Zn(2+). Residue glutamate 145 is part of the active site. Residue histidine 148 coordinates Zn(2+). A run of 2 helical transmembrane segments spans residues 159–179 and 199–219; these read LIQGVLNTFVIFLSRIIAYAV and ISSIACEILFGILASIVVMFF. Glutamate 224 serves as a coordination point for Zn(2+).

The protein belongs to the peptidase M48B family. Zn(2+) serves as cofactor.

The protein localises to the cell inner membrane. The protein is Protease HtpX homolog of Pelodictyon phaeoclathratiforme (strain DSM 5477 / BU-1).